Consider the following 426-residue polypeptide: Tektin-1 (426 aa).

Coiled coils occupy residues 21-84, 268-307, and 339-383; these read KNQY…LEQL, LKET…LDQE, and KEVG…ENTI. The interval 396–426 is disordered; the sequence is SNPLRDGGDQGQWARACAPTPSAEDGTSHTD.

The protein belongs to the tektin family. Microtubule inner protein component of sperm flagellar doublet microtubules. Post-translationally, ubiquitinated, leading to its degradation. Deubiquitinated by USP16, promoting its stability.

The protein resides in the cytoplasm. It is found in the cytoskeleton. The protein localises to the cilium axoneme. Its subcellular location is the flagellum axoneme. In terms of biological role, microtubule inner protein (MIP) part of the dynein-decorated doublet microtubules (DMTs) in cilia and flagellar axoneme. Forms filamentous polymers in the walls of ciliary and flagellar microtubules. The sequence is that of Tektin-1 (TEKT1) from Canis lupus familiaris (Dog).